A 643-amino-acid polypeptide reads, in one-letter code: Complement component C1q receptor (643 aa).

The signal sequence occupies residues 1–23; it reads MVTSTGLLLLLGLLGQLWAGAAA. At 24-571 the chain is on the extracellular side; that stretch reads DSEAVVCEGT…HSDSDTDGQK (548 aa). Residues 31-173 enclose the C-type lectin domain; sequence EGTACYTAHW…CGTPDAPGNS (143 aa). 16 disulfides stabilise this stretch: Cys140–Cys164, Cys261–Cys272, Cys268–Cys282, Cys284–Cys297, Cys303–Cys314, Cys308–Cys325, Cys327–Cys340, Cys346–Cys355, Cys351–Cys364, Cys366–Cys380, Cys386–Cys397, Cys393–Cys406, Cys408–Cys422, Cys428–Cys437, Cys433–Cys446, and Cys448–Cys461. 2 consecutive EGF-like domains span residues 257–298 and 299–341; these read PKFG…VTCA and SRNP…VHCV. N-linked (GlcNAc...) asparagine glycosylation occurs at Asn322. In terms of domain architecture, EGF-like 3; calcium-binding spans 342 to 381; it reads DIDECEDSPCDQECINTPGGFHCECWVGYQSSGSKEEACE. The region spanning 382–423 is the EGF-like 4; calcium-binding domain; the sequence is DVDECTAAYSPCAQGCTNTDGSFYCSCKEGYIMSGEDSTQCE. The 39-residue stretch at 424–462 folds into the EGF-like 5; calcium-binding domain; that stretch reads DIDECLGNPCDTLCINTDGSFRCGCPAGFELAPNGVSCT. Residues 469–517 are disordered; sequence ELPARPPQKEDKGDGKESTVPLTEMPGSLNGSKDVSNRAQTTDLSIQSD. A compositionally biased stretch (basic and acidic residues) spans 475–485; it reads PQKEDKGDGKE. The segment covering 497 to 517 has biased composition (polar residues); that stretch reads LNGSKDVSNRAQTTDLSIQSD. N-linked (GlcNAc...) asparagine glycosylation is present at Asn498. A helical transmembrane segment spans residues 572-592; sequence LLLFYILGTVVAISLLLALAL. Residues 593–643 lie on the Cytoplasmic side of the membrane; it reads GLLIYLKRKAKKEEIKEKKAQNAADSYSWIPERAESRAPENQYSPTPGTDC. A disordered region spans residues 606–643; sequence EIKEKKAQNAADSYSWIPERAESRAPENQYSPTPGTDC. Ser618 bears the Phosphoserine mark. Residues Tyr619 and Tyr635 each carry the phosphotyrosine modification. The span at 631–643 shows a compositional bias: polar residues; that stretch reads PENQYSPTPGTDC.

As to quaternary structure, homodimer. Interacts with C1QBP; the association may represent a cell surface C1q receptor. Interacts with surfactant protein A/SFTPA1. Interacts with multimerin-2/MMRN2. Interacts with DAG1; this interaction plays an important role in endothelial cell migration. Interacts with CBL. Interacts with IGFBP7. Interacts with VEGFR2. N- and O-glycosylated. Post-translationally, phosphorylated on Tyr-619 and Tyr-635 by SRC; these phosphorylations promote endothelial cell adhesion and migration. As to expression, widely expressed. Highly expressed in lung and heart. Expressed at lower level in brain, thymus, liver, spleen, intestine, kidney, adrenal gland, muscle and testis. Expressed on endothelial cells, platelets, undifferentiated monocytes and circulating natural killer cells.

It is found in the cell membrane. Functionally, cell surface receptor that plays a role in various physiological processes including inflammation, phagocytosis, and cell adhesion. Plays a role in phagocytosis and enhances the uptake of apoptotic cells and immune complexes by acting as a receptor for defense collagens including surfactant protein A/SFTPA1, C1q, and mannose-binding lectin (MBL2). Plays a role in the regulation of endothelial cell function and adhesion by activating angiogenesis. Mechanistically, exerts its angiogenic function by associating with beta-dystroglycan, leading to SRC-dependent phosphorylation and subsequent recruitment of CBL. In turn, CBL provides a docking site for downstream signaling components, such as CRKL to enhance cell migration. Participates in angiogenesis also by acting as a receptor for the ECM pan-endothelial glycoprotein multimerin-2/MMRN2 and IGFBP7 ligands. Both ligands play a non-redundant role in CD93-mediated endothelial cell function. Acts as a key regulator of endothelial barrier function through modulating VEGFR2 function. The polypeptide is Complement component C1q receptor (Cd93) (Rattus norvegicus (Rat)).